A 606-amino-acid chain; its full sequence is NADH-ubiquinone oxidoreductase chain 5 (606 aa).

The next 15 membrane-spanning stretches (helical) occupy residues 3–23 (VINL…LPIT), 38–58 (ITKM…LLFL), 87–107 (FFSL…MEFS), 124–144 (LLLF…LQLF), 180–200 (IGDM…NSWE), 216–236 (LLGL…HPWL), 244–264 (TPVS…FTLI), 276–296 (IQTS…ICAL), 304–323 (IIAL…IGIN), 328–350 (AFTH…GSII), 369–389 (MPIT…MPFL), 404–424 (MSYI…MTAS), 460–480 (LILG…PHTT), 483–503 (MTMP…GFTV), and 586–606 (LMKL…LITL).

It belongs to the complex I subunit 5 family. Core subunit of respiratory chain NADH dehydrogenase (Complex I) which is composed of 45 different subunits.

Its subcellular location is the mitochondrion inner membrane. It catalyses the reaction a ubiquinone + NADH + 5 H(+)(in) = a ubiquinol + NAD(+) + 4 H(+)(out). Core subunit of the mitochondrial membrane respiratory chain NADH dehydrogenase (Complex I) which catalyzes electron transfer from NADH through the respiratory chain, using ubiquinone as an electron acceptor. Essential for the catalytic activity and assembly of complex I. This chain is NADH-ubiquinone oxidoreductase chain 5 (MT-ND5), found in Elephas maximus (Indian elephant).